Reading from the N-terminus, the 263-residue chain is Metaxin-2 (263 aa).

At Ser-2 the chain carries N-acetylserine.

The protein belongs to the metaxin family. Interacts with MTX1/metaxin-1. Associates with the mitochondrial contact site and cristae organizing system (MICOS) complex, composed of at least MICOS10/MIC10, CHCHD3/MIC19, CHCHD6/MIC25, APOOL/MIC27, IMMT/MIC60, APOO/MIC23/MIC26 and QIL1/MIC13. This complex was also known under the names MINOS or MitOS complex. The MICOS complex associates with mitochondrial outer membrane proteins SAMM50, MTX1 and MTX2 (together described as components of the mitochondrial outer membrane sorting assembly machinery (SAM) complex) and DNAJC11, mitochondrial inner membrane protein TMEM11 and with HSPA9. The MICOS and SAM complexes together with DNAJC11 are part of a large protein complex spanning both membranes termed the mitochondrial intermembrane space bridging (MIB) complex.

It localises to the mitochondrion outer membrane. The protein resides in the mitochondrion. In terms of biological role, involved in transport of proteins into the mitochondrion. The chain is Metaxin-2 (MTX2) from Homo sapiens (Human).